The following is a 378-amino-acid chain: Gibberellin 20 oxidase 2 (378 aa).

Residues 1 to 10 (MAILCTTTSP) are compositionally biased toward polar residues. The interval 1–26 (MAILCTTTSPAEKEHEPKQDLEKDQT) is disordered. A compositionally biased stretch (basic and acidic residues) spans 11 to 25 (AEKEHEPKQDLEKDQ). The Fe2OG dioxygenase domain occupies 220–320 (ENDSIMRLNH…RKSMAFFLCP (101 aa)). Residues His245, Asp247, and His301 each contribute to the Fe cation site. Residue Arg311 is part of the active site.

This sequence belongs to the iron/ascorbate-dependent oxidoreductase family. GA20OX subfamily. Fe(2+) serves as cofactor. It depends on L-ascorbate as a cofactor. Expressed in inflorescence and developing siliques. Detected in seeds, roots, cotyledons and leaves. In seeds, specifically detected at the rim of the embryo and the outer integument.

The enzyme catalyses gibberellin A12 + 2 2-oxoglutarate + 3 O2 + H(+) = gibberellin A9 + 2 succinate + 3 CO2 + 2 H2O. The catalysed reaction is gibberellin A12 + 2-oxoglutarate + O2 = gibberellin A15 + succinate + CO2. It catalyses the reaction gibberellin A15 + 2-oxoglutarate + O2 = gibberellin A24 + succinate + CO2 + H2O. It carries out the reaction gibberellin A53 + 2-oxoglutarate + O2 = gibberellin A44 + succinate + CO2. The enzyme catalyses gibberellin A12 + 3 2-oxoglutarate + 3 O2 = gibberellin A25 + 3 succinate + 3 CO2 + H2O + H(+). The protein operates within plant hormone biosynthesis; gibberellin biosynthesis. Functionally, key oxidase enzyme in the biosynthesis of gibberellin that catalyzes the conversion of GA12 to GA9, via a three-step oxidation at C-20 of the GA skeleton, and GA25 is also formed as a minor product. GA53 is less effectively oxidized than GA12 and is only oxidized one step to GA44. Involved in the promotion of the floral transition, fertility and silique elongation, but plays only a minor role in elongation of seedling organs. Acts redundantly with GA20OX1. The chain is Gibberellin 20 oxidase 2 (GA20OX2) from Arabidopsis thaliana (Mouse-ear cress).